Here is a 1132-residue protein sequence, read N- to C-terminus: Large proline-rich protein BAG6 (1132 aa).

Met1 bears the N-acetylmethionine mark. Residues 17–92 (LEVLVKTLDS…HLVERAPPQT (76 aa)) enclose the Ubiquitin-like domain. Disordered stretches follow at residues 87–126 (RAPPQTHLPSGASSGTGSASATHGGGSPPGTRGPGASVHD) and 189–272 (LQCR…NHPS). Low complexity predominate over residues 95-108 (PSGASSGTGSASAT). A phosphoserine mark is found at Ser96 and Ser113. Thr117 bears the Phosphothreonine mark. Composition is skewed to pro residues over residues 200–210 (SQPPPQPPAVT) and 251–262 (TPGPAPAGPTPA). Residues 242-270 (RAPAQNPELTPGPAPAGPTPAPETNAPNH) form repeat 1. The segment at 242-636 (RAPAQNPELT…VASPTITVAM (395 aa)) is 4 X 29 AA approximate repeats. Thr350 is subject to Phosphothreonine. 3 disordered regions span residues 385–441 (VTMT…TSHP), 461–528 (IQDS…TLQG), and 560–603 (PGMA…PSMA). Residues 393–407 (RPPPTPNAEAPPPGP) show a composition bias toward pro residues. Positions 408 to 426 (GQASSVAPSSTNVESSAEG) are enriched in low complexity. The stretch at 415–443 (PSSTNVESSAEGAPPPGPAPPPATSHPRV) is repeat 2. 2 stretches are compositionally biased toward pro residues: residues 427–438 (APPPGPAPPPAT) and 507–520 (PTPPQARPSHPGGP). Residues 569–586 (ATASASAGTTNTATTAGP) are compositionally biased toward low complexity. 2 repeat units span residues 574 to 602 (SAGTTNTATTAGPAPGGPAQPPPTPQPSM) and 608 to 636 (SQLLGNLLGPAGPGAGGSGVASPTITVAM). Pro residues predominate over residues 588–599 (PGGPAQPPPTPQ). The segment at 651–692 (QATQTAPPPPPPPPPPPPAPEQQTMPPPGSPSGGAGSPGGLG) is disordered. Pro residues predominate over residues 656–680 (APPPPPPPPPPPPAPEQQTMPPPGS). Residues 681–692 (PSGGAGSPGGLG) show a composition bias toward gly residues. Val832, Ser964, and Ser973 each carry phosphoserine. A disordered region spans residues 947 to 1132 (PQPLPEEPME…NAQRAFADDP (186 aa)). Low complexity predominate over residues 1005 to 1020 (AETEPWAAAVPPEWVP). The tract at residues 1010 to 1040 (WAAAVPPEWVPIIQQDIQSQRKVKPQPPLSD) is required for interaction with GET4. Residues 1012 to 1054 (AAVPPEWVPIIQQDIQSQRKVKPQPPLSDAYLSGMPAKRRKTM) carry the Nuclear localization site motif. Positions 1022–1132 (IQQDIQSQRK…NAQRAFADDP (111 aa)) are sufficient for the delivery of client proteins to the endoplasmic reticulum. Thr1053 is subject to Phosphothreonine. Residues 1058–1115 (GPQLLLSEAVSRAAKAAGARPLTSPESLSRDLEAPEVQESYRQQLRSDIQKRLQEDPN) form a BAG-similar domain, required and sufficient for interaction with UBL4A region. The span at 1066-1076 (AVSRAAKAAGA) shows a compositional bias: low complexity. 2 positions are modified to phosphoserine: Ser1081 and Ser1117.

In terms of assembly, component of the BAG6/BAT3 complex, also named BAT3 complex, at least composed of BAG6, UBL4A and GET4/TRC35. Interacts with GET4; the interaction is direct and localizes BAG6 in the cytosol. Interacts with UBL4A; the interaction is direct and required for UBL4A protein stability. Interacts with AIFM1. Interacts with HSPA2. Interacts with CTCFL. Interacts with p300/EP300. Interacts (via ubiquitin-like domain) with RNF126; required for BAG6-dependent ubiquitination of proteins mislocalized to the cytosol. Interacts (via ubiquitin-like domain) with SGTA; SGTA competes with RNF126 by binding the same region of BAG6, thereby promoting deubiquitination of BAG6-target proteins and rescuing them from degradation. Interacts with ricin A chain. Interacts with VCP and AMFR; both form the VCP/p97-AMFR/gp78 complex. Interacts with SYVN1. Interacts with USP13; the interaction is direct and may mediate UBL4A deubiquitination. Interacts with ZFAND2B. Interacts with KPNA2. Interacts with UBQLN4. As to quaternary structure, (Microbial infection) Interacts with L.pneumophila Lpg2160 and LegU1 proteins. In terms of processing, ricin can induce a cleavage by the caspase CASP3. The released C-terminal peptide induces apoptosis. (Microbial infection) In case of infection by L.pneumophila, ubiquitinated by the SCF(LegU1) complex. As to expression, expressed by immature dendritic cells (at protein level).

Its subcellular location is the cytoplasm. The protein localises to the cytosol. It localises to the nucleus. It is found in the secreted. The protein resides in the extracellular exosome. In terms of biological role, ATP-independent molecular chaperone preventing the aggregation of misfolded and hydrophobic patches-containing proteins. Functions as part of a cytosolic protein quality control complex, the BAG6/BAT3 complex, which maintains these client proteins in a soluble state and participates in their proper delivery to the endoplasmic reticulum or alternatively can promote their sorting to the proteasome where they undergo degradation. The BAG6/BAT3 complex is involved in the post-translational delivery of tail-anchored/type II transmembrane proteins to the endoplasmic reticulum membrane. Recruited to ribosomes, it interacts with the transmembrane region of newly synthesized tail-anchored proteins and together with SGTA and ASNA1 mediates their delivery to the endoplasmic reticulum. Client proteins that cannot be properly delivered to the endoplasmic reticulum are ubiquitinated by RNF126, an E3 ubiquitin-protein ligase associated with BAG6 and are sorted to the proteasome. SGTA which prevents the recruitment of RNF126 to BAG6 may negatively regulate the ubiquitination and the proteasomal degradation of client proteins. Similarly, the BAG6/BAT3 complex also functions as a sorting platform for proteins of the secretory pathway that are mislocalized to the cytosol either delivering them to the proteasome for degradation or to the endoplasmic reticulum. The BAG6/BAT3 complex also plays a role in the endoplasmic reticulum-associated degradation (ERAD), a quality control mechanism that eliminates unwanted proteins of the endoplasmic reticulum through their retrotranslocation to the cytosol and their targeting to the proteasome. It maintains these retrotranslocated proteins in an unfolded yet soluble state condition in the cytosol to ensure their proper delivery to the proteasome. BAG6 is also required for selective ubiquitin-mediated degradation of defective nascent chain polypeptides by the proteasome. In this context, it may participate in the production of antigenic peptides and play a role in antigen presentation in immune response. BAG6 is also involved in endoplasmic reticulum stress-induced pre-emptive quality control, a mechanism that selectively attenuates the translocation of newly synthesized proteins into the endoplasmic reticulum and reroutes them to the cytosol for proteasomal degradation. BAG6 may ensure the proper degradation of these proteins and thereby protects the endoplasmic reticulum from protein overload upon stress. By inhibiting the polyubiquitination and subsequent proteasomal degradation of HSPA2 it may also play a role in the assembly of the synaptonemal complex during spermatogenesis. Also positively regulates apoptosis by interacting with and stabilizing the proapoptotic factor AIFM1. By controlling the steady-state expression of the IGF1R receptor, indirectly regulates the insulin-like growth factor receptor signaling pathway. Functionally, involved in DNA damage-induced apoptosis: following DNA damage, accumulates in the nucleus and forms a complex with p300/EP300, enhancing p300/EP300-mediated p53/TP53 acetylation leading to increase p53/TP53 transcriptional activity. When nuclear, may also act as a component of some chromatin regulator complex that regulates histone 3 'Lys-4' dimethylation (H3K4me2). Released extracellularly via exosomes, it is a ligand of the natural killer/NK cells receptor NCR3 and stimulates NK cells cytotoxicity. It may thereby trigger NK cells cytotoxicity against neighboring tumor cells and immature myeloid dendritic cells (DC). Its function is as follows. Mediates ricin-induced apoptosis. This chain is Large proline-rich protein BAG6, found in Homo sapiens (Human).